The primary structure comprises 1010 residues: Plasma membrane ATPase 2 (1010 aa).

The segment covering 1–14 (MQRNNGEGRPEGMH) has biased composition (basic and acidic residues). 2 disordered regions span residues 1-126 (MQRN…EDED) and 139-165 (QDQEEEQVEEEESPGPAGAAKVVPEEL). At 1 to 201 (MQRNNGEGRP…KEEKTNNIKK (201 aa)) the chain is on the cytoplasmic side. A compositionally biased stretch (polar residues) spans 25 to 34 (FKNNASPQDD). Residues 42–52 (YEEGGVEDSAV) are compositionally biased toward acidic residues. Residues 68–106 (APNTHAQQANLQSGNTSITHETQSTSRGQEATTSPSLSA) are compositionally biased toward polar residues. A compositionally biased stretch (acidic residues) spans 140–151 (DQEEEQVEEEES). The helical transmembrane segment at 202 to 222 (FLSFFVGPIQFVMELAAALAA) threads the bilayer. Over 223-226 (GLRD) the chain is Extracellular. Residues 227–246 (WVDFGVICALLLLNATVGFV) form a helical membrane-spanning segment. The Cytoplasmic segment spans residues 247 to 377 (QEYQAGSIVD…SQGHFTEVLN (131 aa)). The helical transmembrane segment at 378–399 (GIGTILLVLVILTLLCIYTAAF) threads the bilayer. Residues 400 to 410 (YRSVRLAALLE) are Extracellular-facing. The chain crosses the membrane as a helical span at residues 411–433 (YTLAITIIGVPVGLPAVVTTTMA). Over 434–805 (VGAAYLAKKK…LIIRNQLLNL (372 aa)) the chain is Cytoplasmic. The active-site 4-aspartylphosphate intermediate is Asp-464. The Mg(2+) site is built by Asp-720 and Asp-724. The chain crosses the membrane as a helical span at residues 806–824 (ELIVFIAIFADVATLAIAY). Topologically, residues 825 to 840 (DNAPYAMKPVKWNLPR) are extracellular. The chain crosses the membrane as a helical span at residues 841 to 860 (LWGLATIVGILLAIGTWIVN). Residues 861–912 (TTMIAQGQNRGIVQNFGVQDEVLFLQISLTENWLIFITRCSGPFWSSFPSWQ) lie on the Cytoplasmic side of the membrane. A helical transmembrane segment spans residues 913 to 933 (LSGAVLVVDILATLFCIFGWF). Over 934–946 (KGGHQTSIVAVIR) the chain is Extracellular. Residues 947–963 (IWMYSFGIFCLIAGVYY) form a helical membrane-spanning segment. The Cytoplasmic segment spans residues 964–1010 (ILSESSSFDRWMHGKHKERGTTRKLEDFVMQLQRTSTHHEAEGKVTS).

The protein belongs to the cation transport ATPase (P-type) (TC 3.A.3) family. Type IIIA subfamily. Post-translationally, in addition to transient phosphorylation of the active site Asp residue, this protein, but not the product of the pma1 locus, is phosphorylated efficiently in isolated plasma membrane.

The protein resides in the cell membrane. It carries out the reaction ATP + H2O + H(+)(in) = ADP + phosphate + 2 H(+)(out). Functionally, the plasma membrane ATPase of plants and fungi is a hydrogen ion pump. The proton gradient it generates drives the active transport of nutrients by H(+)-symport. The resulting external acidification and/or internal alkinization may mediate growth responses. The protein is Plasma membrane ATPase 2 (pma2) of Schizosaccharomyces pombe (strain 972 / ATCC 24843) (Fission yeast).